The chain runs to 613 residues: Phosphomethylpyrimidine synthase (613 aa).

Substrate-binding positions include asparagine 215, methionine 244, tyrosine 273, histidine 309, 329-331 (SRG), 370-373 (DGLR), and glutamate 409. Residue histidine 413 participates in Zn(2+) binding. Residue tyrosine 436 participates in substrate binding. Histidine 477 contacts Zn(2+). 3 residues coordinate [4Fe-4S] cluster: cysteine 557, cysteine 560, and cysteine 565.

Belongs to the ThiC family. As to quaternary structure, homodimer. Requires [4Fe-4S] cluster as cofactor.

The enzyme catalyses 5-amino-1-(5-phospho-beta-D-ribosyl)imidazole + S-adenosyl-L-methionine = 4-amino-2-methyl-5-(phosphooxymethyl)pyrimidine + CO + 5'-deoxyadenosine + formate + L-methionine + 3 H(+). The protein operates within cofactor biosynthesis; thiamine diphosphate biosynthesis. Functionally, catalyzes the synthesis of the hydroxymethylpyrimidine phosphate (HMP-P) moiety of thiamine from aminoimidazole ribotide (AIR) in a radical S-adenosyl-L-methionine (SAM)-dependent reaction. This chain is Phosphomethylpyrimidine synthase, found in Paramagnetospirillum magneticum (strain ATCC 700264 / AMB-1) (Magnetospirillum magneticum).